Here is an 80-residue protein sequence, read N- to C-terminus: Cytochrome c oxidase subunit 7A1, mitochondrial (80 aa).

Residues 1–21 constitute a mitochondrion transit peptide; the sequence is MRALRVSQALVRSFSSTARNR. The Mitochondrial matrix segment spans residues 22–46; that stretch reads LENRVAEKQKIFQADNDLPVHLKGG. Residues 47-75 traverse the membrane as a helical segment; the sequence is ATDNILYRVTMTLCLGGTVYSLYCLGWAS. Residues 76–80 are Mitochondrial intermembrane-facing; that stretch reads FPHKK.

Belongs to the cytochrome c oxidase VIIa family. As to quaternary structure, component of the complex IV (CIV, cytochrome c oxidase), a multisubunit enzyme composed of 14 subunits. The complex is composed of a catalytic core of 3 subunits MT-CO1, MT-CO2 and MT-CO3, encoded in the mitochondrial DNA, and 11 supernumerary subunits COX4I1 (or COX4I2), COX5A, COX5B, COX6A2 (or COX6A1), COX6B1 (or COX6B2), COX6C, COX7A1 (or COX7A2), COX7B, COX7C, COX8B and NDUFA4, which are encoded in the nuclear genome. The complex exists as a monomer or a dimer and forms supercomplexes (SCs) in the inner mitochondrial membrane with NADH-ubiquinone oxidoreductase (complex I, CI) and ubiquinol-cytochrome c oxidoreductase (cytochrome b-c1 complex, complex III, CIII), resulting in different assemblies (supercomplex SCI(1)III(2)IV(1) and megacomplex MCI(2)III(2)IV(2)).

The protein localises to the mitochondrion inner membrane. Its pathway is energy metabolism; oxidative phosphorylation. Functionally, component of the mitochondrial respiratory complex IV (CIV, also named cytochrome c oxidase complex), the last enzyme in the mitochondrial electron transport chain which drives oxidative phosphorylation. The CIV complex is the component of the respiratory chain that catalyzes the reduction of oxygen to water. Acts as an assembly factor that specifically drives the homodimerization of CIV complexes, mediating the formation of mitochondrial respiratory supercomplexes (respirasomes) containing two CIV: supercomplxes with two molecules of CIV show improved activity. Despite being highly expressed in brown adipose tissue, not required for thermogenesis. This Sus scrofa (Pig) protein is Cytochrome c oxidase subunit 7A1, mitochondrial (COX7A1).